We begin with the raw amino-acid sequence, 221 residues long: Lipoprotein-releasing system ATP-binding protein LolD (221 aa).

The 215-residue stretch at 6–220 (LILKNISKHY…YKLKHGLLNI (215 aa)) folds into the ABC transporter domain. An ATP-binding site is contributed by 42–49 (GSSGSGKS).

It belongs to the ABC transporter superfamily. Lipoprotein translocase (TC 3.A.1.125) family. The complex is composed of two ATP-binding proteins (LolD) and two transmembrane proteins (LolC and LolE).

It localises to the cell inner membrane. Functionally, part of the ABC transporter complex LolCDE involved in the translocation of mature outer membrane-directed lipoproteins, from the inner membrane to the periplasmic chaperone, LolA. Responsible for the formation of the LolA-lipoprotein complex in an ATP-dependent manner. This is Lipoprotein-releasing system ATP-binding protein LolD from Rickettsia felis (strain ATCC VR-1525 / URRWXCal2) (Rickettsia azadi).